The primary structure comprises 262 residues: Probable proteasome subunit beta type-7 (262 aa).

It belongs to the peptidase T1B family. As to quaternary structure, the 26S proteasome consists of a 20S proteasome core and two 19S regulatory subunits. The 20S proteasome core is composed of 28 subunits that are arranged in four stacked rings, resulting in a barrel-shaped structure. The two end rings are each formed by seven alpha subunits, and the two central rings are each formed by seven beta subunits. The catalytic chamber with the active sites is on the inside of the barrel.

The protein localises to the cytoplasm. It localises to the nucleus. Functionally, non-catalytic component of the proteasome, a multicatalytic proteinase complex which is characterized by its ability to cleave peptides with Arg, Phe, Tyr, Leu, and Glu adjacent to the leaving group at neutral or slightly basic pH. The proteasome has an ATP-dependent proteolytic activity. In Schizosaccharomyces pombe (strain 972 / ATCC 24843) (Fission yeast), this protein is Probable proteasome subunit beta type-7.